Here is a 284-residue protein sequence, read N- to C-terminus: Tropomyosin (284 aa).

A coiled-coil region spans residues 1–284 (MEAIKKKMQA…DQTFAELTGY (284 aa)).

Belongs to the tropomyosin family. As to quaternary structure, homodimer.

Functionally, tropomyosin, in association with the troponin complex, plays a central role in the calcium dependent regulation of muscle contraction. This is Tropomyosin from Dermatophagoides farinae (American house dust mite).